A 91-amino-acid chain; its full sequence is Envelope glycoprotein N (91 aa).

The signal sequence occupies residues 1 to 23 (MGPPRRVCRAGLLFVLLVALAAG). A disordered region spans residues 23-48 (GDAGPRGEPPGEEGGRDGIGGARCET). Topologically, residues 24 to 55 (DAGPRGEPPGEEGGRDGIGGARCETQNTGQMS) are virion surface. Residues 56–76 (APGALVPFYVGMASMGVCIIA) traverse the membrane as a helical segment. At 77-91 (HVCQICQRLLAAGHA) the chain is on the intravirion side.

The protein belongs to the herpesviridae glycoprotein N family. As to quaternary structure, interacts (via N-terminus) with gM (via N-terminus). The gM-gN heterodimer forms the gCII complex.

It localises to the virion membrane. Its subcellular location is the host membrane. It is found in the host Golgi apparatus. The protein resides in the host trans-Golgi network. Its function is as follows. Envelope glycoprotein necessary for proper maturation of gM and modulation of its membrane fusion activity. Also plays a critical role in virion morphogenesis. The sequence is that of Envelope glycoprotein N from Homo sapiens (Human).